The sequence spans 293 residues: MTIETLSTQSKAQVLAEALPWLKQLHGRVVVIKYGGNAMTDDTLRQAFAADMAFLRNCGIHPVVVHGGGPQITAMLGKLGIEGDFKGGFRVTTPEVLDVARMVLFGQVGRELVNLINAHGPYAVGVTGEDAQLFTAVRRSVNVDGVATDIGLVGDVDHVNAAALMDLIAAHRIPVISTLAPDAEGVVHNINADTAAAALAEALGAEKLLMLTDVEGLYTSWPERDSLVREIDTAALEQLLPRLEAGMIPKVEACLRAVTGGVPSAHVIDGRVEHCVLVELFTNAGTGTKVVSA.

Substrate contacts are provided by residues 68–69 (GG), Arg90, and Asn189.

The protein belongs to the acetylglutamate kinase family. ArgB subfamily.

The protein localises to the cytoplasm. The enzyme catalyses N-acetyl-L-glutamate + ATP = N-acetyl-L-glutamyl 5-phosphate + ADP. Its pathway is amino-acid biosynthesis; L-arginine biosynthesis; N(2)-acetyl-L-ornithine from L-glutamate: step 2/4. Functionally, catalyzes the ATP-dependent phosphorylation of N-acetyl-L-glutamate. The chain is Acetylglutamate kinase from Mycobacterium marinum (strain ATCC BAA-535 / M).